Reading from the N-terminus, the 215-residue chain is Ependymin-2 (215 aa).

A signal peptide spans 1–20 (MHTVKLLCVVFSCLCAVAWA). N-linked (GlcNAc...) asparagine glycosylation is found at Asn71 and Asn94.

Belongs to the ependymin family. In terms of assembly, forms disulfide-linked dimers. Different glycosylation variants are known as EPD-beta and EPD-gamma. In terms of processing, binds calcium through the terminal sialic acids. As to expression, EPDs are synthesized in the meninx and secreted in the cerebrospinal fluid.

The protein localises to the secreted. Its function is as follows. May play a role in neural plasticity. May be involved during axon regeneration. This chain is Ependymin-2 (epd2), found in Carassius auratus (Goldfish).